The following is a 337-amino-acid chain: Probable cytosolic iron-sulfur protein assembly protein Ciao1 (337 aa).

WD repeat units follow at residues 12 to 51 (GHRGRAWGAGWHPKGNVLATCGEDKTIRIWAEDASQRWVA), 58 to 97 (GHSRTIRDVAWSPCGQYLASASFDATVAIWDKKSGEFECN), 102 to 141 (GHENEVKSVSWSKSGSLLATCSRDKSVWVWEVAQEDEYEC), 147 to 186 (THTQDVKKVEWHPHEDILASASYDNTIKLYKEDLADSDWS), 193 to 232 (SHESTVWSISFDGSGNRLASCSDDQTVKIWQEYKPGNEFG), 251 to 290 (YHSRSVYDISWCKQSGLLATACGDDMVRIFKEVEGSSPHE), and 301 to 337 (AHSQDVNTVEWNPTVVGLLVTTSDDGDVKLWKYEPEE).

Belongs to the WD repeat CIA1 family.

In terms of biological role, essential component of the cytosolic iron-sulfur (Fe/S) protein assembly machinery. Required for the maturation of extramitochondrial Fe/S proteins. The chain is Probable cytosolic iron-sulfur protein assembly protein Ciao1 from Aedes aegypti (Yellowfever mosquito).